A 278-amino-acid chain; its full sequence is Sulfur carrier protein FdhD (278 aa).

The active-site Cysteine persulfide intermediate is cysteine 121. 260–265 (FCKPGR) is a Mo-bis(molybdopterin guanine dinucleotide) binding site.

It belongs to the FdhD family.

It localises to the cytoplasm. In terms of biological role, required for formate dehydrogenase (FDH) activity. Acts as a sulfur carrier protein that transfers sulfur from IscS to the molybdenum cofactor prior to its insertion into FDH. This is Sulfur carrier protein FdhD from Salmonella agona (strain SL483).